Consider the following 488-residue polypeptide: MKIRVRFAPSPTGFLHIGGVRTALFNYLFAKRYGGTFVLRIEDTDELRSTEESTQAIFDGLEWTKLLWDEGPFRDGKENGPYPPYLQSERVKAGIYQKYIDQLLEEGKAYKCYCTPEELEAMREEAAAKKLPPRYPGKCKHLTKDEQAALEAQGRKPVIRFNMPSEGSVEWADLIRGPVSFASKDLYDLVISKPSGFPTYNFACVIDDHLMEMSHIIRGEDHISNTPMQIQMYKAFGWTPPEFGHLPMIHGSDGTKLSKRHGATNVIEYQKQGYLSEALVNYLALLGWSNSESQQLFAPGELEQKFDIKGVQKSPAIFDNAKLDWMNSEYIRATPISKLTDLAIPFIKEENIDISKTDRAALENIIAIEQEKYRTLKEIPGLIKFFFEDVVFEEGAKEKVYGKPESKDVLLGITRVYQNIEPFKEADLEAATRAFAKDNGFKTGQIFHPVRVAVSGRTHGPTLFKMLELLGKETVIKRLNEAAKYSNI.

The 'HIGH' region signature appears at 9-19 (PSPTGFLHIGG). Positions 112, 114, 139, and 141 each coordinate Zn(2+). A 'KMSKS' region motif is present at residues 256–260 (KLSKR). K259 contributes to the ATP binding site.

It belongs to the class-I aminoacyl-tRNA synthetase family. Glutamate--tRNA ligase type 1 subfamily. As to quaternary structure, monomer. Zn(2+) serves as cofactor.

It localises to the cytoplasm. The enzyme catalyses tRNA(Glu) + L-glutamate + ATP = L-glutamyl-tRNA(Glu) + AMP + diphosphate. In terms of biological role, catalyzes the attachment of glutamate to tRNA(Glu) in a two-step reaction: glutamate is first activated by ATP to form Glu-AMP and then transferred to the acceptor end of tRNA(Glu). This is Glutamate--tRNA ligase from Elusimicrobium minutum (strain Pei191).